Consider the following 323-residue polypeptide: Beta-ketoacyl-[acyl-carrier-protein] synthase III (323 aa).

Residues C112 and H249 contribute to the active site. Positions Q250 to R254 are ACP-binding. N279 is a catalytic residue.

This sequence belongs to the thiolase-like superfamily. FabH family. In terms of assembly, homodimer.

It localises to the cytoplasm. The enzyme catalyses malonyl-[ACP] + acetyl-CoA + H(+) = 3-oxobutanoyl-[ACP] + CO2 + CoA. The protein operates within lipid metabolism; fatty acid biosynthesis. Its function is as follows. Catalyzes the condensation reaction of fatty acid synthesis by the addition to an acyl acceptor of two carbons from malonyl-ACP. Catalyzes the first condensation reaction which initiates fatty acid synthesis and may therefore play a role in governing the total rate of fatty acid production. Possesses both acetoacetyl-ACP synthase and acetyl transacylase activities. Its substrate specificity determines the biosynthesis of branched-chain and/or straight-chain of fatty acids. This chain is Beta-ketoacyl-[acyl-carrier-protein] synthase III, found in Clostridium kluyveri (strain NBRC 12016).